Consider the following 290-residue polypeptide: Acetylglutamate kinase (290 aa).

Residues Gly-64–Gly-65, Arg-86, and Asn-183 each bind substrate.

Belongs to the acetylglutamate kinase family. ArgB subfamily.

It is found in the cytoplasm. The enzyme catalyses N-acetyl-L-glutamate + ATP = N-acetyl-L-glutamyl 5-phosphate + ADP. It participates in amino-acid biosynthesis; L-arginine biosynthesis; N(2)-acetyl-L-ornithine from L-glutamate: step 2/4. In terms of biological role, catalyzes the ATP-dependent phosphorylation of N-acetyl-L-glutamate. In Halothermothrix orenii (strain H 168 / OCM 544 / DSM 9562), this protein is Acetylglutamate kinase.